Consider the following 129-residue polypeptide: uncharacterized protein (129 aa).

This is an uncharacterized protein from Saccharomyces cerevisiae (strain ATCC 204508 / S288c) (Baker's yeast).